Consider the following 131-residue polypeptide: Antiholin (131 aa).

The Periplasmic segment spans residues 1–15; that stretch reads MTMIAWMQHFLETDE. Cytoplasmic loops occupy residues 1 to 52 and 39 to 50; these read MTMI…SSFK and FAKLNPNIKFSS. Residues 16-38 traverse the membrane as a helical segment; sequence TKLIYWLTFLMVCMVVDTVLGVL. Residues 53–75 form a helical membrane-spanning segment; it reads IKTGVLIKVSEMILALLAVPFAV. Over 76-78 the chain is Periplasmic; it reads PFP. Residues 79 to 101 form a helical membrane-spanning segment; it reads AGLPLLYTVYTALCVSEIYSIFG. Over 102–131 the chain is Cytoplasmic; that stretch reads HLRLVDDKSDFLEILENFFKRTSGKNKEDK.

The protein belongs to the bacteriophage holin family. phi29likevirus holin subfamily. Homomultimer. Interacts with isoform Antiholin; this interaction blocks the holin homomultimerization and delays host cell lysis.

It is found in the host cell inner membrane. Its function is as follows. Accumulates harmlessly in the cytoplasmic membrane until it reaches a critical concentration that triggers the formation of micron-scale pores (holes) causing host cell membrane disruption and endolysin escape into the periplasmic space. Determines the precise timing of host cell lysis. Participates with the endolysin and spanin proteins in the sequential events which lead to the programmed host cell lysis releasing the mature viral particles from the host cell. Functionally, counteracts the aggregation of the holin molecules and thus of pore formation. This Bacillus subtilis (Bacteriophage PZA) protein is Antiholin (14).